The primary structure comprises 781 residues: Protein translocase subunit SecA 2 (781 aa).

Residues Gln-85, 103 to 107 (GEGKT), and Asp-491 each bind ATP.

The protein belongs to the SecA family. As to quaternary structure, monomer and homodimer. Part of the essential Sec protein translocation apparatus which comprises SecA, SecYEG and auxiliary proteins SecDF. Other proteins may also be involved.

Its subcellular location is the cell membrane. The protein resides in the cytoplasm. The enzyme catalyses ATP + H2O + cellular proteinSide 1 = ADP + phosphate + cellular proteinSide 2.. In terms of biological role, part of the Sec protein translocase complex. Interacts with the SecYEG preprotein conducting channel. Has a central role in coupling the hydrolysis of ATP to the transfer of proteins into and across the cell membrane, serving as an ATP-driven molecular motor driving the stepwise translocation of polypeptide chains across the membrane. The sequence is that of Protein translocase subunit SecA 2 from Clostridioides difficile (strain 630) (Peptoclostridium difficile).